A 503-amino-acid polypeptide reads, in one-letter code: Glycerol kinase (503 aa).

T14 contacts ADP. Residues T14, T15, and S16 each coordinate ATP. Position 14 (T14) interacts with sn-glycerol 3-phosphate. An ADP-binding site is contributed by R18. 4 residues coordinate sn-glycerol 3-phosphate: R84, E85, Y136, and D246. Residues R84, E85, Y136, D246, and Q247 each coordinate glycerol. 2 residues coordinate ADP: T268 and G311. Residues T268, G311, Q315, and G412 each coordinate ATP. ADP is bound by residues G412 and N416.

The protein belongs to the FGGY kinase family.

It carries out the reaction glycerol + ATP = sn-glycerol 3-phosphate + ADP + H(+). Its pathway is polyol metabolism; glycerol degradation via glycerol kinase pathway; sn-glycerol 3-phosphate from glycerol: step 1/1. With respect to regulation, inhibited by fructose 1,6-bisphosphate (FBP). In terms of biological role, key enzyme in the regulation of glycerol uptake and metabolism. Catalyzes the phosphorylation of glycerol to yield sn-glycerol 3-phosphate. The polypeptide is Glycerol kinase (Haemophilus influenzae (strain 86-028NP)).